Consider the following 515-residue polypeptide: Penton protein (515 aa).

The interval Met1–Met25 is disordered. Residues Thr9–Tyr22 show a composition bias toward pro residues.

Belongs to the adenoviridae penton family. In terms of assembly, interacts with the fiber protein (via N-terminal tail region). Interacts with the capsid vertex protein; this interaction binds the penton base to neighboring peripentonal hexons.

The protein resides in the virion. It localises to the host nucleus. Functionally, major capsid protein that self-associates to form penton base pentamers, each in the shape of a pentagon, situated at the 12 vertices of the pseudo T=25 capsid. Involved in virus secondary attachment to host cell after initial attachment by the fiber protein, and in endocytosis of virions. As the virus enters the host cell, penton proteins are shed concomitant with virion acidification in the endosome. This chain is Penton protein, found in Galliformes (FAdV-1).